The following is a 280-amino-acid chain: 3-hydroxyanthranilate 3,4-dioxygenase (280 aa).

The interval 1 to 160 (MAIPVNVKKW…SEQYKSGKPD (160 aa)) is domain A (catalytic). Arg-43 is an O2 binding site. Residues His-47, Glu-53, and His-91 each contribute to the Fe cation site. Glu-53 provides a ligand contact to substrate. The substrate site is built by Arg-95 and Glu-105. The segment at 161–177 (PAQPIGKMPFFLNTEQV) is linker. A domain B region spans residues 178–280 (MEPFSFQNWL…IALSTSQVPA (103 aa)).

It belongs to the 3-HAO family. In terms of assembly, monomer. Requires Fe(2+) as cofactor.

It is found in the cytoplasm. It localises to the cytosol. It carries out the reaction 3-hydroxyanthranilate + O2 = (2Z,4Z)-2-amino-3-carboxymuconate 6-semialdehyde. The protein operates within cofactor biosynthesis; NAD(+) biosynthesis; quinolinate from L-kynurenine: step 3/3. In terms of biological role, catalyzes the oxidative ring opening of 3-hydroxyanthranilate to 2-amino-3-carboxymuconate semialdehyde, which spontaneously cyclizes to quinolinate. This is 3-hydroxyanthranilate 3,4-dioxygenase (haao) from Xenopus tropicalis (Western clawed frog).